The primary structure comprises 249 residues: MFGLKAKSTKKVLGSIPKHIGIIMDGNGRWAKKRLKPRVFGHKAGMDALQEVTITASELGVKVLTVYAFSTENWSRPQDEVSFIMNLPVAFFDKYVPVLHENNVKIQMIGETSRLPEDTLAALNAAIDKTKRNTGLILNFALNYGGRAEITSAVRFIAQDVLDAKLNPGDITEDLIANYLMTDHLPYLYRDPDLIIRTSGELRLSNFLPWQSAYSEFYFTPVLWPDFKKAELLKAIADYNRRQRRFGKV.

Asp-25 is an active-site residue. A Mg(2+)-binding site is contributed by Asp-25. Substrate contacts are provided by residues 26–29 (GNGR), Trp-30, Arg-38, His-42, and 70–72 (STE). The active-site Proton acceptor is Asn-73. Substrate contacts are provided by residues Trp-74, Arg-76, Arg-197, and 203 to 205 (RLS). Glu-216 lines the Mg(2+) pocket.

Belongs to the UPP synthase family. Homodimer. Mg(2+) serves as cofactor.

Functionally, catalyzes the condensation of isopentenyl diphosphate (IPP) with allylic pyrophosphates generating different type of terpenoids. The sequence is that of Isoprenyl transferase from Streptococcus pyogenes serotype M6 (strain ATCC BAA-946 / MGAS10394).